A 153-amino-acid chain; its full sequence is MSKPNHPRTLADSEAEAVLRNLRCSPRKLNVVAASIRNKPAGKAVADLTFSKRRIAKDVKKALESAIANAENNHQLDVDRLVVTTADVGRSIVMRRFHARGRGRAARVEKWFSHLRIVVAERDIETKADRRARRAAAKPAASASPAANEGVPA.

The interval 128–153 (ADRRARRAAAKPAASASPAANEGVPA) is disordered. Residues 137-147 (AKPAASASPAA) are compositionally biased toward low complexity.

This sequence belongs to the universal ribosomal protein uL22 family. Part of the 50S ribosomal subunit.

Its function is as follows. This protein binds specifically to 23S rRNA; its binding is stimulated by other ribosomal proteins, e.g. L4, L17, and L20. It is important during the early stages of 50S assembly. It makes multiple contacts with different domains of the 23S rRNA in the assembled 50S subunit and ribosome. The globular domain of the protein is located near the polypeptide exit tunnel on the outside of the subunit, while an extended beta-hairpin is found that lines the wall of the exit tunnel in the center of the 70S ribosome. The polypeptide is Large ribosomal subunit protein uL22 (Acidiphilium cryptum (strain JF-5)).